The sequence spans 261 residues: Pimeloyl-[acyl-carrier protein] methyl ester esterase (261 aa).

An AB hydrolase-1 domain is found at 16–241 (LVLLHGWGLN…HAAHAPFISH (226 aa)). Substrate is bound by residues Trp-22, 82–83 (SL), and 143–147 (FLALQ). The active-site Nucleophile is Ser-82. Residues Asp-207 and His-235 contribute to the active site. A substrate-binding site is contributed by His-235.

Belongs to the AB hydrolase superfamily. Carboxylesterase BioH family. In terms of assembly, monomer.

Its subcellular location is the cytoplasm. The enzyme catalyses 6-carboxyhexanoyl-[ACP] methyl ester + H2O = 6-carboxyhexanoyl-[ACP] + methanol + H(+). It participates in cofactor biosynthesis; biotin biosynthesis. Its function is as follows. The physiological role of BioH is to remove the methyl group introduced by BioC when the pimeloyl moiety is complete. It allows to synthesize pimeloyl-ACP via the fatty acid synthetic pathway through the hydrolysis of the ester bonds of pimeloyl-ACP esters. This Photorhabdus laumondii subsp. laumondii (strain DSM 15139 / CIP 105565 / TT01) (Photorhabdus luminescens subsp. laumondii) protein is Pimeloyl-[acyl-carrier protein] methyl ester esterase.